The chain runs to 333 residues: Probable pyridoxal reductase 2 (333 aa).

Residue Y52 is the Proton donor of the active site.

The protein belongs to the aldo/keto reductase family.

The protein resides in the cytoplasm. The catalysed reaction is pyridoxine + NADP(+) = pyridoxal + NADPH + H(+). Its function is as follows. Catalyzes the reduction of pyridoxal (PL) with NADPH and oxidation of pyridoxine (PN) with NADP(+). The sequence is that of Probable pyridoxal reductase 2 from Schizosaccharomyces pombe (strain 972 / ATCC 24843) (Fission yeast).